The primary structure comprises 393 residues: uncharacterized protein (393 aa).

4 residues coordinate [4Fe-4S] cluster: C72, C82, C85, and C160. S-adenosyl-L-methionine is bound by residues Q215, F245, E267, and D313. The active-site Nucleophile is the C340.

It belongs to the class I-like SAM-binding methyltransferase superfamily. RNA M5U methyltransferase family.

This is an uncharacterized protein from Nitrosomonas europaea (strain ATCC 19718 / CIP 103999 / KCTC 2705 / NBRC 14298).